Here is a 172-residue protein sequence, read N- to C-terminus: Large ribosomal subunit protein uL22y (172 aa).

Belongs to the universal ribosomal protein uL22 family.

This Hordeum vulgare (Barley) protein is Large ribosomal subunit protein uL22y.